The sequence spans 665 residues: MPGMKRTMSSECLLPYYTAHSYRSMGVFNTSMGNLQRQLYKGGEYDIFKYAPMFESDFIQISKRGEVIDVHNRVRMVTVCIASTSPVLPLPDVMLLARPAKVCEEHARRARFIKGKGCKPSKTLELTRLLPLKFVKISVHDHEKQQLRLKLATGRTFYLQLCPSSDAREDLFCYWEKLVYLLRPPMTNCISNSTLPTGETSVDTKSTLVSEIRGEGDQNSRPQSSPTVSEATSAAFAGGERTQPAAAAAVTPVSAKARAAGTAGAAAGTAGAAAGTAGPAAGPAAGTAGPAAGTAGAAAGTAGAAAGTAGATAGTAGATAGMAGATAGTAAETAGTAAETAGAARAAGGPMAAAVAAPSAGMTKAETATSPTSGVISLAATTTKPPGSGQVAAAMIGSAAKDQVGGESSKAMALAANITLENVDVALAGAANSISESPPAGGDASGSPDTGLNVAFAGSIKTKSPAEDKPEAPLVSTLQSEGYMCERDGSQKVSQTSSEAKEKRERREKDRTSSRKSSHHRRTGMSRHSSKDKSRKTSSYRSVSGKTREDKGKGHGRLRGKRHSSSHKSESRTGHKTRKNRSPAGLGSVSKRATKITSFFRSFLVRPTPKAGDTSCDRGGVDIVTKLVEKKQDIEAVMEKSKDSEFKDTVISETMEKIILETKSI.

3 disordered regions span residues 211-240 (EIRG…AGGE), 272-296 (AAAG…GTAG), and 480-590 (SEGY…GSVS). Residues 219–232 (NSRPQSSPTVSEAT) are compositionally biased toward polar residues. Residues 499-513 (EAKEKRERREKDRTS) show a composition bias toward basic and acidic residues. Basic residues-rich tracts occupy residues 514-538 (SRKS…RKTS) and 554-566 (GHGR…HSSS). The Bipartite nuclear localization signal motif lies at 515-531 (RKSSHHRRTGMSRHSSK). Serine 652 is modified (phosphoserine).

The protein belongs to the GARIN family. In terms of assembly, interacts (via N-terminus) with RAB2B (in GTP-bound form). Interacts with FRG1. Expressed in adult spermatocytes and spermatids.

The protein localises to the golgi apparatus. Its subcellular location is the nucleus. It localises to the cajal body. Functionally, may be involved in RNA biogenesis. This Mus musculus (Mouse) protein is Golgi-associated RAB2B interactor protein 3.